Consider the following 117-residue polypeptide: uncharacterized protein (117 aa).

The span at 1–19 (MTSNPSSSADQPLSGTTVP) shows a compositional bias: polar residues. Residues 1–28 (MTSNPSSSADQPLSGTTVPGSVPGKAPE) form a disordered region. The next 2 membrane-spanning stretches (helical) occupy residues 38–58 (AAVWSALIVGFLILILLLIFI) and 76–96 (LPLGVAILLAAVGGGLITVFA).

It is found in the cell membrane. This is an uncharacterized protein from Mycobacterium tuberculosis (strain ATCC 25618 / H37Rv).